The chain runs to 391 residues: Succinate--CoA ligase [ADP-forming] subunit beta (391 aa).

One can recognise an ATP-grasp domain in the interval 9–246 (KHLFTEAGIA…LTQEDETEVR (238 aa)). ATP is bound by residues Lys46, 53 to 55 (GRG), Glu99, Leu102, and Glu107. Mg(2+)-binding residues include Asn199 and Asp213. Substrate contacts are provided by residues Asn266 and 323–325 (GIV).

Belongs to the succinate/malate CoA ligase beta subunit family. In terms of assembly, heterotetramer of two alpha and two beta subunits. Requires Mg(2+) as cofactor.

It catalyses the reaction succinate + ATP + CoA = succinyl-CoA + ADP + phosphate. It carries out the reaction GTP + succinate + CoA = succinyl-CoA + GDP + phosphate. The protein operates within carbohydrate metabolism; tricarboxylic acid cycle; succinate from succinyl-CoA (ligase route): step 1/1. Functionally, succinyl-CoA synthetase functions in the citric acid cycle (TCA), coupling the hydrolysis of succinyl-CoA to the synthesis of either ATP or GTP and thus represents the only step of substrate-level phosphorylation in the TCA. The beta subunit provides nucleotide specificity of the enzyme and binds the substrate succinate, while the binding sites for coenzyme A and phosphate are found in the alpha subunit. This Halorhodospira halophila (strain DSM 244 / SL1) (Ectothiorhodospira halophila (strain DSM 244 / SL1)) protein is Succinate--CoA ligase [ADP-forming] subunit beta.